A 283-amino-acid chain; its full sequence is BTB/POZ domain-containing protein KCTD15 (283 aa).

The interval 1 to 32 (MPHRKERPSGSSLHTHGSTGTAEGGNMSRLSL) is disordered. A compositionally biased stretch (low complexity) spans 9–21 (SGSSLHTHGSTGT). S31, S35, and S38 each carry phosphoserine. One can recognise a BTB domain in the interval 56 to 126 (APVHIDVGGH…LRTSKLLLPD (71 aa)).

In terms of assembly, forms oligomers, predominantly homopentamers. Interacts with KCTD1, probably forming heteropentamers depending on its abundance in a cell-type dependent manner. Interacts with TFAP2A; this interaction inhibits TFAP2A transcriptional activation.

It localises to the nucleus. Its function is as follows. During embryonic development, it is involved in neural crest formation. Inhibits AP2 transcriptional activity by interaction with its activation domain. The protein is BTB/POZ domain-containing protein KCTD15 (KCTD15) of Homo sapiens (Human).